Here is a 345-residue protein sequence, read N- to C-terminus: S-adenosylmethionine:tRNA ribosyltransferase-isomerase (345 aa).

It belongs to the QueA family. Monomer.

It localises to the cytoplasm. It carries out the reaction 7-aminomethyl-7-carbaguanosine(34) in tRNA + S-adenosyl-L-methionine = epoxyqueuosine(34) in tRNA + adenine + L-methionine + 2 H(+). Its pathway is tRNA modification; tRNA-queuosine biosynthesis. Its function is as follows. Transfers and isomerizes the ribose moiety from AdoMet to the 7-aminomethyl group of 7-deazaguanine (preQ1-tRNA) to give epoxyqueuosine (oQ-tRNA). In Thermus thermophilus (strain ATCC BAA-163 / DSM 7039 / HB27), this protein is S-adenosylmethionine:tRNA ribosyltransferase-isomerase.